Consider the following 308-residue polypeptide: Protein translocase subunit SecF (308 aa).

The next 6 membrane-spanning stretches (helical) occupy residues 22 to 42, 140 to 160, 164 to 184, 194 to 214, 246 to 266, and 272 to 292; these read AVSYSFSIILSLISFIWIGIY, IEAGAMAMLSSFLAIMVYIWV, WYFGLGILIALVHDVILALGF, LSTIAAVLTIIGYSVNDSVVI, ILTVITTLLANLALMLFGGEA, and VLVFFGIIAGTYSSIFISAPI.

It belongs to the SecD/SecF family. SecF subfamily. Forms a complex with SecD. Part of the essential Sec protein translocation apparatus which comprises SecA, SecYEG and auxiliary proteins SecDF-YajC and YidC.

The protein resides in the cell inner membrane. In terms of biological role, part of the Sec protein translocase complex. Interacts with the SecYEG preprotein conducting channel. SecDF uses the proton motive force (PMF) to complete protein translocation after the ATP-dependent function of SecA. The sequence is that of Protein translocase subunit SecF from Rickettsia akari (strain Hartford).